Reading from the N-terminus, the 438-residue chain is Putative hydroxypyruvate reductase (438 aa).

The catalysed reaction is (R)-glycerate + NAD(+) = 3-hydroxypyruvate + NADH + H(+). It catalyses the reaction (R)-glycerate + NADP(+) = 3-hydroxypyruvate + NADPH + H(+). Its pathway is carbohydrate acid metabolism; tartrate degradation; 3-hydroxypyruvate from D-glycerate: step 1/1. Degrades an unidentified toxic product from the first step of tartrate degradation. The chain is Putative hydroxypyruvate reductase (ttuD) from Agrobacterium vitis (Rhizobium vitis).